Here is a 420-residue protein sequence, read N- to C-terminus: MMSLRICLLATCLLVAAHASKDASNDRLKPTKWLTATELENVPSLNDITWERLENQPLEQGAKVIEKIYHVGQIKHDLTPSFVPSPSNVPVWIIKSNGQKVECKLNNYVETAKAQPGFGEDEVTIVLTGLPKTSPAQQKAMRRLIQAYVQKYNLQQLQKNAQEQQQQLKSSDYDYTSSEEAADQWKSAKAASGDLIIIDLGSTLTNFKRYAMLDVLNTGAMIGQTLIDLTNKGVPQEIIHLIGQGISAHVAGAAGNKYTAQTGHKLRRITGLDPAKVLSKRPQILGGLSRGDADFVDAIHTSTFAMGTPIRCGDVDFYPNGPSTGVPGSENVIEAVARATRYFAESVRPGSERNFPAVPANSLKQYKEQDGFGKRAYMGLQIDYDLRGDYILEVNAKSPFGQRSPAHKQAAYHGMHHAQN.

The first 19 residues, Met-1–Ala-19, serve as a signal peptide directing secretion. Thr-37 carries the phosphothreonine modification. Phosphoserine is present on residues Ser-177 and Ser-178. Residues Tyr-384 and Tyr-390 each carry the sulfotyrosine modification. The disordered stretch occupies residues Gly-401 to Asn-420.

The protein belongs to the AB hydrolase superfamily. Lipase family. Tyrosine sulfation occurs in the female only and plays an essential functional role. As to expression, synthesized in the fat body and ovarian follicle cells and accumulate in the oocyte.

It localises to the secreted. Functionally, vitellogenin is the major yolk protein of eggs where it is used as a food source during embryogenesis. Vitellogenins and their receptor yl/yolkless are required for maintenance of microtubule plus-end orientation towards the posterior pole of oocytes. Involved in polarized localization of germ plasm components, such as osk mRNA and vas protein, to the oocyte posterior cortex. Receptor-mediated endocytosis by yl/yolkless is crucial for actin reorganization, mediated by osk isoform A/Long, required to anchor germ plasm components to the oocyte cortex. The sequence is that of Vitellogenin-3 (Yp3) from Drosophila melanogaster (Fruit fly).